Consider the following 430-residue polypeptide: Solanesyl-diphosphate synthase 1, mitochondrial (430 aa).

The N-terminal 31 residues, 1–31, are a transit peptide targeting the mitochondrion; that stretch reads MSWRWALARRVAALGATSGGGDGATAQAQRL. 3 residues coordinate isopentenyl diphosphate: K133, R136, and H182. Mg(2+) contacts are provided by D189 and D193. R198 provides a ligand contact to an all-trans-polyprenyl diphosphate. R199 contacts isopentenyl diphosphate. 4 residues coordinate an all-trans-polyprenyl diphosphate: K275, T276, Q313, and K330.

It belongs to the FPP/GGPP synthase family. In terms of assembly, homodimer. Mg(2+) serves as cofactor. In terms of tissue distribution, expressed in leaves, stems and roots. Highest expression in roots.

It localises to the mitochondrion. The catalysed reaction is 7 isopentenyl diphosphate + (2E)-geranyl diphosphate = all-trans-nonaprenyl diphosphate + 7 diphosphate. It functions in the pathway cofactor biosynthesis; ubiquinone biosynthesis. Involved in the supply of solanesyl diphosphate for ubiquinone-9 (UQ-9) biosynthesis in mitochondria. Farnesyl diphosphate is the preferred substrate. In Oryza sativa subsp. japonica (Rice), this protein is Solanesyl-diphosphate synthase 1, mitochondrial.